Consider the following 557-residue polypeptide: Arginine--tRNA ligase (557 aa).

Positions 132–142 (ANPTGLLHMGN) match the 'HIGH' region motif.

The protein belongs to the class-I aminoacyl-tRNA synthetase family. Monomer.

The protein resides in the cytoplasm. It catalyses the reaction tRNA(Arg) + L-arginine + ATP = L-arginyl-tRNA(Arg) + AMP + diphosphate. This chain is Arginine--tRNA ligase, found in Carboxydothermus hydrogenoformans (strain ATCC BAA-161 / DSM 6008 / Z-2901).